The chain runs to 509 residues: Cytochrome P450 monooxygenase aba1 (509 aa).

The first 31 residues, M1–A31, serve as a signal peptide directing secretion. N-linked (GlcNAc...) asparagine glycosylation is present at N402. Position 451 (C451) interacts with heme. Residue N462 is glycosylated (N-linked (GlcNAc...) asparagine).

The protein belongs to the cytochrome P450 family. It depends on heme as a cofactor.

The protein operates within hormone biosynthesis. In terms of biological role, cytochrome P450 monooxygenase; part of the gene cluster that mediates the biosynthesis of abscisic acid (ABA), a phytohormone that acts antagonistically toward salicylic acid (SA), jasmonic acid (JA) and ethylene (ETH) signaling, to impede plant defense responses. The first step of the pathway catalyzes the reaction from farnesyl diphosphate to alpha-ionylideneethane performed by the alpha-ionylideneethane synthase aba3 via a three-step reaction mechanism involving 2 neutral intermediates, beta-farnesene and allofarnesene. The cytochrome P450 monooxygenase aba1 might then be involved in the conversion of alpha-ionylideneethane to alpha-ionylideneacetic acid. Alpha-ionylideneacetic acid is further converted to abscisic acid in 2 steps involving the cytochrome P450 monooxygenase aba2 and the short-chain dehydrogenase/reductase aba4, via the intermediates 1'-deoxy-ABA or 1',4'-trans-diol-ABA, depending on the order of action of these 2 enzymes. Aba2 is responsible for the hydroxylation of carbon atom C-1' and aba4 might be involved in the oxidation of the C-4' carbon atom. The sequence is that of Cytochrome P450 monooxygenase aba1 (aba1) from Botryotinia fuckeliana (strain B05.10) (Noble rot fungus).